The sequence spans 179 residues: uncharacterized protein (179 aa).

This is an uncharacterized protein from Escherichia coli (strain K12).